The primary structure comprises 262 residues: Diphthine synthase (262 aa).

S-adenosyl-L-methionine-binding positions include Leu10, Asp87, Val90, 115–116 (SI), Leu166, Ala209, and His234.

The protein belongs to the diphthine synthase family. As to quaternary structure, homodimer.

It catalyses the reaction 2-[(3S)-amino-3-carboxypropyl]-L-histidyl-[translation elongation factor 2] + 3 S-adenosyl-L-methionine = diphthine-[translation elongation factor 2] + 3 S-adenosyl-L-homocysteine + 3 H(+). It functions in the pathway protein modification; peptidyl-diphthamide biosynthesis. Functionally, S-adenosyl-L-methionine-dependent methyltransferase that catalyzes the trimethylation of the amino group of the modified target histidine residue in translation elongation factor 2 (EF-2), to form an intermediate called diphthine. The three successive methylation reactions represent the second step of diphthamide biosynthesis. The chain is Diphthine synthase from Pyrococcus abyssi (strain GE5 / Orsay).